The primary structure comprises 883 residues: Kinesin-like protein 5 (883 aa).

The region spanning 6–390 is the Kinesin motor domain; the sequence is SITVTVRVRP…LKYANRAKNI (385 aa). An ATP-binding site is contributed by 144–151; sequence GATGCGKT. Coiled-coil stretches lie at residues 396–435 and 563–588; these read RNMISVDRHVSQYVKAIVELREQISELENRLAQIDLSSQS and LQDEVDLLKSIIENQVLDAQNKVDEF. The segment at 755-785 is disordered; sequence VSPMLEDKPEPGLLIKSPLEKKQEVNSESTQ.

Belongs to the TRAFAC class myosin-kinesin ATPase superfamily. Kinesin family. Kinesin II subfamily. In terms of assembly, heterodimer with klp6.

Its subcellular location is the cytoplasm. The protein resides in the cytoskeleton. The protein localises to the chromosome. It is found in the centromere. It localises to the kinetochore. Its subcellular location is the spindle. Functionally, has a role in establishing metaphase during mitosis. Required for chromosome segregation where it generates tension during kinetochore capturing. This Schizosaccharomyces pombe (strain 972 / ATCC 24843) (Fission yeast) protein is Kinesin-like protein 5 (klp5).